We begin with the raw amino-acid sequence, 382 residues long: Phosphatidylglycerol--prolipoprotein diacylglyceryl transferase (382 aa).

3 consecutive transmembrane segments (helical) span residues Ile18–Phe38, Phe53–Ile73, and Leu91–Phe111. Arg162 is an a 1,2-diacyl-sn-glycero-3-phospho-(1'-sn-glycerol) binding site. Helical transmembrane passes span Ile213–Val233, Gly243–Phe263, Ile274–Ile294, and Phe302–Phe322.

The protein belongs to the Lgt family.

Its subcellular location is the cell membrane. The enzyme catalyses L-cysteinyl-[prolipoprotein] + a 1,2-diacyl-sn-glycero-3-phospho-(1'-sn-glycerol) = an S-1,2-diacyl-sn-glyceryl-L-cysteinyl-[prolipoprotein] + sn-glycerol 1-phosphate + H(+). Its pathway is protein modification; lipoprotein biosynthesis (diacylglyceryl transfer). In terms of biological role, catalyzes the transfer of the diacylglyceryl group from phosphatidylglycerol to the sulfhydryl group of the N-terminal cysteine of a prolipoprotein, the first step in the formation of mature lipoproteins. This chain is Phosphatidylglycerol--prolipoprotein diacylglyceryl transferase, found in Mycoplasma genitalium (strain ATCC 33530 / DSM 19775 / NCTC 10195 / G37) (Mycoplasmoides genitalium).